Reading from the N-terminus, the 134-residue chain is Small ribosomal subunit protein uS12 (134 aa).

At aspartate 89 the chain carries 3-methylthioaspartic acid. Residues 101–134 (TLDASGVNGRNQSRSKYGTKRPKPGQAAAGGKKK) are disordered. The span at 125 to 134 (GQAAAGGKKK) shows a compositional bias: low complexity.

This sequence belongs to the universal ribosomal protein uS12 family. As to quaternary structure, part of the 30S ribosomal subunit. Contacts proteins S8 and S17. May interact with IF1 in the 30S initiation complex.

Its function is as follows. With S4 and S5 plays an important role in translational accuracy. In terms of biological role, interacts with and stabilizes bases of the 16S rRNA that are involved in tRNA selection in the A site and with the mRNA backbone. Located at the interface of the 30S and 50S subunits, it traverses the body of the 30S subunit contacting proteins on the other side and probably holding the rRNA structure together. The combined cluster of proteins S8, S12 and S17 appears to hold together the shoulder and platform of the 30S subunit. This Gemmatimonas aurantiaca (strain DSM 14586 / JCM 11422 / NBRC 100505 / T-27) protein is Small ribosomal subunit protein uS12.